The primary structure comprises 211 residues: Redox-sensing transcriptional repressor Rex (211 aa).

The segment at residues 18–57 (LYYRFIESLHAAGKQRVSSTELSQAVKVDSATIRRDFSYF) is a DNA-binding region (H-T-H motif). 92–97 (GVGNLG) is a binding site for NAD(+).

It belongs to the transcriptional regulatory Rex family. As to quaternary structure, homodimer.

The protein localises to the cytoplasm. Its function is as follows. Modulates transcription in response to changes in cellular NADH/NAD(+) redox state. The chain is Redox-sensing transcriptional repressor Rex from Shouchella clausii (strain KSM-K16) (Alkalihalobacillus clausii).